Reading from the N-terminus, the 272-residue chain is Hydroxyethylthiazole kinase (272 aa).

Substrate is bound at residue methionine 46. ATP-binding residues include arginine 122 and threonine 168. Substrate is bound at residue glycine 195.

Belongs to the Thz kinase family. The cofactor is Mg(2+).

The catalysed reaction is 5-(2-hydroxyethyl)-4-methylthiazole + ATP = 4-methyl-5-(2-phosphooxyethyl)-thiazole + ADP + H(+). It functions in the pathway cofactor biosynthesis; thiamine diphosphate biosynthesis; 4-methyl-5-(2-phosphoethyl)-thiazole from 5-(2-hydroxyethyl)-4-methylthiazole: step 1/1. In terms of biological role, catalyzes the phosphorylation of the hydroxyl group of 4-methyl-5-beta-hydroxyethylthiazole (THZ). This is Hydroxyethylthiazole kinase from Alkaliphilus metalliredigens (strain QYMF).